The primary structure comprises 918 residues: Protein SEY1 homolog (918 aa).

Over 1-701 (MESSNHLPNK…AGTSVSSWRN (701 aa)) the chain is Cytoplasmic. A GB1/RHD3-type G domain is found at 46–280 (GFKFNVVTIL…VPSDGFFVYS (235 aa)). A GTP-binding site is contributed by 56–63 (GSQSSGKS). The stretch at 554–626 (SLVLLLKATQ…DALTLLQVLK (73 aa)) forms a coiled coil. A helical transmembrane segment spans residues 702 to 722 (IPPVFWLVLLVLGWNELRAAF). Over 723–725 (RVL) the chain is Lumenal. Residues 726-746 (LKFYILIPLLIVSYFTFSYSA) form a helical membrane-spanning segment. The Cytoplasmic segment spans residues 747–918 (NKLLGPKANE…CGKAVHLAQW (172 aa)).

It belongs to the TRAFAC class dynamin-like GTPase superfamily. GB1/RHD3 GTPase family. RHD3 subfamily.

It localises to the endoplasmic reticulum membrane. Its function is as follows. Probable GTP-binding protein that may be involved in cell development. This chain is Protein SEY1 homolog, found in Theileria annulata.